Consider the following 197-residue polypeptide: Holliday junction branch migration complex subunit RuvA (197 aa).

Residues 1-63 (MISSLRGEVL…EDSMTLYGFV (63 aa)) are domain I. Residues 64 to 139 (DGETRDLFLT…KVGPAGSAAT (76 aa)) are domain II. A flexible linker region spans residues 139 to 143 (TAPAV). The tract at residues 144–197 (NGHTVRAPVVEALVGLGFAAKQAEEATDKVLAGDGEATTSSALRAALSLLGKAR) is domain III.

This sequence belongs to the RuvA family. As to quaternary structure, homotetramer. Forms an RuvA(8)-RuvB(12)-Holliday junction (HJ) complex. HJ DNA is sandwiched between 2 RuvA tetramers; dsDNA enters through RuvA and exits via RuvB. An RuvB hexamer assembles on each DNA strand where it exits the tetramer. Each RuvB hexamer is contacted by two RuvA subunits (via domain III) on 2 adjacent RuvB subunits; this complex drives branch migration. In the full resolvosome a probable DNA-RuvA(4)-RuvB(12)-RuvC(2) complex forms which resolves the HJ.

It is found in the cytoplasm. The RuvA-RuvB-RuvC complex processes Holliday junction (HJ) DNA during genetic recombination and DNA repair, while the RuvA-RuvB complex plays an important role in the rescue of blocked DNA replication forks via replication fork reversal (RFR). RuvA specifically binds to HJ cruciform DNA, conferring on it an open structure. The RuvB hexamer acts as an ATP-dependent pump, pulling dsDNA into and through the RuvAB complex. HJ branch migration allows RuvC to scan DNA until it finds its consensus sequence, where it cleaves and resolves the cruciform DNA. This chain is Holliday junction branch migration complex subunit RuvA, found in Mycobacterium marinum (strain ATCC BAA-535 / M).